The primary structure comprises 338 residues: Anthranilate phosphoribosyltransferase (338 aa).

5-phospho-alpha-D-ribose 1-diphosphate is bound by residues Gly-82, 85 to 86, Thr-90, 92 to 95, 110 to 118, and Ser-122; these read GD, NIST, and KHGNRAASS. Residue Gly-82 participates in anthranilate binding. Ser-94 contributes to the Mg(2+) binding site. Asn-113 lines the anthranilate pocket. Arg-168 contacts anthranilate. Mg(2+) is bound by residues Asp-226 and Glu-227.

This sequence belongs to the anthranilate phosphoribosyltransferase family. In terms of assembly, homodimer. Requires Mg(2+) as cofactor.

It catalyses the reaction N-(5-phospho-beta-D-ribosyl)anthranilate + diphosphate = 5-phospho-alpha-D-ribose 1-diphosphate + anthranilate. Its pathway is amino-acid biosynthesis; L-tryptophan biosynthesis; L-tryptophan from chorismate: step 2/5. Catalyzes the transfer of the phosphoribosyl group of 5-phosphorylribose-1-pyrophosphate (PRPP) to anthranilate to yield N-(5'-phosphoribosyl)-anthranilate (PRA). The protein is Anthranilate phosphoribosyltransferase of Deinococcus radiodurans (strain ATCC 13939 / DSM 20539 / JCM 16871 / CCUG 27074 / LMG 4051 / NBRC 15346 / NCIMB 9279 / VKM B-1422 / R1).